The following is a 372-amino-acid chain: Glutamate 5-kinase (372 aa).

ATP is bound at residue lysine 14. The substrate site is built by serine 54, aspartate 141, and asparagine 153. An ATP-binding site is contributed by 173 to 174 (TD). Residues 280–358 (RGTLVLDDGA…DAIEALLGYV (79 aa)) form the PUA domain.

The protein belongs to the glutamate 5-kinase family.

Its subcellular location is the cytoplasm. It catalyses the reaction L-glutamate + ATP = L-glutamyl 5-phosphate + ADP. The protein operates within amino-acid biosynthesis; L-proline biosynthesis; L-glutamate 5-semialdehyde from L-glutamate: step 1/2. Its function is as follows. Catalyzes the transfer of a phosphate group to glutamate to form L-glutamate 5-phosphate. The protein is Glutamate 5-kinase of Pseudomonas paraeruginosa (strain DSM 24068 / PA7) (Pseudomonas aeruginosa (strain PA7)).